Consider the following 142-residue polypeptide: Peptide methionine sulfoxide reductase MsrB (142 aa).

Positions lysine 3–phenylalanine 126 constitute a MsrB domain. Cysteine 115 serves as the catalytic Nucleophile.

It belongs to the MsrB Met sulfoxide reductase family.

The enzyme catalyses L-methionyl-[protein] + [thioredoxin]-disulfide + H2O = L-methionyl-(R)-S-oxide-[protein] + [thioredoxin]-dithiol. The protein is Peptide methionine sulfoxide reductase MsrB of Lactococcus lactis subsp. cremoris (strain MG1363).